The primary structure comprises 69 residues: Amphipathic peptide OcyC2 (69 aa).

Positions 1-23 (MKTQFAILMIAVVLMQMLVQTEG) are cleaved as a signal peptide. Isoleucine 37 carries the post-translational modification Isoleucine amide. Residues 41-69 (GLKKLDQLDDTFDSDLSDADVKLLREMFK) constitute a propeptide that is removed on maturation.

The protein belongs to the non-disulfide-bridged peptide (NDBP) superfamily. Short antimicrobial peptide (group 4) family. In terms of tissue distribution, expressed by the venom gland.

The protein localises to the secreted. The protein resides in the target cell membrane. Amphipathic peptide with antimicrobial activity. Shows antifungal activity with MIC values ranging from 25 to 200 uM. Does not show antifungal activity against Candida glabrata (ATCC90030) and Candida parapsilosis (ATCC22019) (MIC&gt;400 uM). This is Amphipathic peptide OcyC2 from Opisthacanthus cayaporum (South American scorpion).